Here is a 275-residue protein sequence, read N- to C-terminus: Putative ribonuclease-like protein YfkH (275 aa).

A run of 6 helical transmembrane segments spans residues 23–43, 83–103, 126–146, 172–192, 199–219, and 235–255; these read LAYFFLLSLFPFLIFMLTLTA, LLSFGIIAALWSASNGMNAIV, IFLTIAMVFTILVALLLPVFG, WGVSPLVLLIVFSALYVIAPN, FVMPGAVFATIGWIIVSTLFS, and IGGIIVLMIWFYLSGILIILG.

It localises to the cell membrane. In Bacillus subtilis (strain 168), this protein is Putative ribonuclease-like protein YfkH (yfkH).